The primary structure comprises 330 residues: Glycerol-3-phosphate dehydrogenase [NAD(P)+] (330 aa).

Residues S10, W11, R31, and K105 each contribute to the NADPH site. Sn-glycerol 3-phosphate contacts are provided by K105, G135, and S137. A139 is a binding site for NADPH. Residues K190, D243, S253, R254, and N255 each contribute to the sn-glycerol 3-phosphate site. The Proton acceptor role is filled by K190. R254 is a binding site for NADPH. Residues V278 and E280 each coordinate NADPH.

This sequence belongs to the NAD-dependent glycerol-3-phosphate dehydrogenase family.

It is found in the cytoplasm. It catalyses the reaction sn-glycerol 3-phosphate + NAD(+) = dihydroxyacetone phosphate + NADH + H(+). It carries out the reaction sn-glycerol 3-phosphate + NADP(+) = dihydroxyacetone phosphate + NADPH + H(+). It functions in the pathway membrane lipid metabolism; glycerophospholipid metabolism. Its function is as follows. Catalyzes the reduction of the glycolytic intermediate dihydroxyacetone phosphate (DHAP) to sn-glycerol 3-phosphate (G3P), the key precursor for phospholipid synthesis. The chain is Glycerol-3-phosphate dehydrogenase [NAD(P)+] from Nitratidesulfovibrio vulgaris (strain ATCC 29579 / DSM 644 / CCUG 34227 / NCIMB 8303 / VKM B-1760 / Hildenborough) (Desulfovibrio vulgaris).